The sequence spans 310 residues: Tagatose-6-phosphate kinase (310 aa).

The protein belongs to the carbohydrate kinase PfkB family. LacC subfamily.

The enzyme catalyses D-tagatofuranose 6-phosphate + ATP = D-tagatofuranose 1,6-bisphosphate + ADP + H(+). The protein operates within carbohydrate metabolism; D-tagatose 6-phosphate degradation; D-glyceraldehyde 3-phosphate and glycerone phosphate from D-tagatose 6-phosphate: step 1/2. This is Tagatose-6-phosphate kinase from Streptococcus agalactiae serotype Ia (strain ATCC 27591 / A909 / CDC SS700).